The sequence spans 468 residues: UDP-N-acetylmuramoyl-L-alanine--L-glutamate ligase (468 aa).

Residue 122–128 coordinates ATP; it reads GTKGKST.

This sequence belongs to the MurCDEF family. MurD2 subfamily.

It is found in the cytoplasm. It catalyses the reaction UDP-N-acetyl-alpha-D-muramoyl-L-alanine + L-glutamate + ATP = UDP-N-acetyl-alpha-D-muramoyl-L-alanyl-L-glutamate + ADP + phosphate + H(+). It participates in cell wall biogenesis; peptidoglycan biosynthesis. In terms of biological role, cell wall formation. Catalyzes the addition of L-glutamate to the nucleotide precursor UDP-N-acetylmuramoyl-L-alanine. This Xanthomonas campestris pv. campestris (strain 8004) protein is UDP-N-acetylmuramoyl-L-alanine--L-glutamate ligase.